Consider the following 511-residue polypeptide: Exodeoxyribonuclease 7 large subunit (511 aa).

Belongs to the XseA family. In terms of assembly, heterooligomer composed of large and small subunits.

It is found in the cytoplasm. It carries out the reaction Exonucleolytic cleavage in either 5'- to 3'- or 3'- to 5'-direction to yield nucleoside 5'-phosphates.. Functionally, bidirectionally degrades single-stranded DNA into large acid-insoluble oligonucleotides, which are then degraded further into small acid-soluble oligonucleotides. This is Exodeoxyribonuclease 7 large subunit from Brucella abortus (strain S19).